A 192-amino-acid chain; its full sequence is Adenylate kinase (192 aa).

Residue 10-18 participates in ATP binding; it reads GVPGVGGTT.

The protein belongs to the archaeal adenylate kinase family. As to quaternary structure, monomer.

The protein resides in the cytoplasm. The enzyme catalyses AMP + ATP = 2 ADP. The sequence is that of Adenylate kinase from Methanococcus maripaludis (strain DSM 14266 / JCM 13030 / NBRC 101832 / S2 / LL).